The following is a 379-amino-acid chain: Elongation factor Ts, mitochondrial (379 aa).

The N-terminal 33 residues, 1–33 (MAWGQGAKRSILGLLFRSQHQTARAYSSSAFQT), are a transit peptide targeting the mitochondrion.

This sequence belongs to the EF-Ts family.

The protein resides in the mitochondrion. In terms of biological role, associates with the EF-Tu.GDP complex and induces the exchange of GDP to GTP. It remains bound to the aminoacyl-tRNA.EF-Tu.GTP complex up to the GTP hydrolysis stage on the ribosome. This Zea mays (Maize) protein is Elongation factor Ts, mitochondrial.